Here is a 303-residue protein sequence, read N- to C-terminus: Golgi to ER traffic protein 2 (303 aa).

The Cytoplasmic segment spans residues 1 to 168 (MSEQPLSQDE…NAYNIYQQRL (168 aa)). A disordered region spans residues 19-86 (RQAKMARGKA…DPEDDPDLMD (68 aa)). Residues 31 to 48 (RLNNILSQGSSVKGTTDP) are compositionally biased toward polar residues. A helical transmembrane segment spans residues 169–189 (WKFRFSIIRFAAVLTNFFYHY). The Lumenal segment spans residues 190 to 216 (LTIQDYSFTSSPHFYVRALAPHPAVNS). The helical transmembrane segment at 217–236 (FITWFSTCEVAILASFYLIT) threads the bilayer. Over 237 to 280 (SKNNIYANASDGNLLLKGISMGAMVLPQLRAYQPLVIRLAHYWE) the chain is Cytoplasmic. A helical membrane pass occupies residues 281 to 301 (VFSMLLGDIFLVVVLFGLVSI). The Lumenal portion of the chain corresponds to 302-303 (YN).

Belongs to the GET2 family. In terms of assembly, component of the Golgi to ER traffic (GET) complex, which is composed of GET1, GET2 and GET3. Within the complex, GET1 and GET2 form a heterotetramer which is stabilized by phosphatidylinositol binding and which binds to the GET3 homodimer.

It localises to the endoplasmic reticulum membrane. Its subcellular location is the golgi apparatus membrane. In terms of biological role, required for the post-translational delivery of tail-anchored (TA) proteins to the endoplasmic reticulum. Together with GET1, acts as a membrane receptor for soluble GET3, which recognizes and selectively binds the transmembrane domain of TA proteins in the cytosol. The GET complex cooperates with the HDEL receptor ERD2 to mediate the ATP-dependent retrieval of resident ER proteins that contain a C-terminal H-D-E-L retention signal from the Golgi to the ER. The sequence is that of Golgi to ER traffic protein 2 from Debaryomyces hansenii (strain ATCC 36239 / CBS 767 / BCRC 21394 / JCM 1990 / NBRC 0083 / IGC 2968) (Yeast).